Here is a 440-residue protein sequence, read N- to C-terminus: Ferredoxin--NADP reductase (440 aa).

In terms of domain architecture, CpcD-like spans 17-75 (SRVFVYEVVGMRQNEETDQTNYPIRKSGSVFIRVPYNRMNQEMQRITRLGGKIVSIQTV). Residues 98–142 (AKSEGNGKATPVKTDSGAKGFAKPPAEEQLKKKDNKGNTMTQAKA) form a disordered region. Basic and acidic residues predominate over residues 122–133 (PAEEQLKKKDNK). The FAD-binding FR-type domain occupies 155–279 (NAPFIGKVIS…TGPVGKEMLL (125 aa)). Residues 214–217 (RLYS), 235–237 (CVR), tyrosine 241, 253–255 (VCS), and threonine 294 each bind FAD. Serine 217 and arginine 237 together coordinate NADP(+). NADP(+) contacts are provided by residues threonine 294, 330-331 (VP), 360-361 (SR), 370-374 (RMYIQ), 399-400 (GL), and glutamate 438.

This sequence belongs to the ferredoxin--NADP reductase type 1 family. FAD is required as a cofactor.

The protein resides in the cellular thylakoid membrane. It carries out the reaction 2 reduced [2Fe-2S]-[ferredoxin] + NADP(+) + H(+) = 2 oxidized [2Fe-2S]-[ferredoxin] + NADPH. This is Ferredoxin--NADP reductase (petH) from Nostoc sp. (strain PCC 7120 / SAG 25.82 / UTEX 2576).